The following is a 358-amino-acid chain: Alanine racemase (358 aa).

Catalysis depends on K35, which acts as the Proton acceptor; specific for D-alanine. K35 is subject to N6-(pyridoxal phosphate)lysine. Position 130 (R130) interacts with substrate. The active-site Proton acceptor; specific for L-alanine is the Y255. M303 provides a ligand contact to substrate.

Belongs to the alanine racemase family. It depends on pyridoxal 5'-phosphate as a cofactor.

The enzyme catalyses L-alanine = D-alanine. The protein operates within amino-acid biosynthesis; D-alanine biosynthesis; D-alanine from L-alanine: step 1/1. Catalyzes the interconversion of L-alanine and D-alanine. May also act on other amino acids. This is Alanine racemase (alr) from Shewanella woodyi (strain ATCC 51908 / MS32).